The sequence spans 756 residues: Disintegrin and metalloproteinase domain-containing protein 5 (756 aa).

Residues 1-16 (MFLLLVLLTGLGGMHA) form the signal peptide. Residues 17 to 142 (DLNPHKTFLQ…AVSGFIHKIY (126 aa)) constitute a propeptide that is removed on maturation. The Extracellular segment spans residues 17–698 (DLNPHKTFLQ…GRHAPFQKQR (682 aa)). The Peptidase M12B domain occupies 183-380 (RYIEMHIVVD…NGLTCLQTNP (198 aa)). Disulfide bonds link C292/C375, C334/C359, C336/C341, and C449/C470. Residues 389–478 (RRICGNGLLE…YCLLDTYVRD (90 aa)) form the Disintegrin domain. N-linked (GlcNAc...) asparagine glycosylation occurs at N559. The region spanning 630-664 (DFETCEASIECSGHGICNNFNHCHCEKGYNPPHCK) is the EGF-like domain. Cystine bridges form between C634/C646, C640/C652, and C654/C663. A helical membrane pass occupies residues 699–719 (FQLIFYISLPVLIITTAILIK). Over 720–756 (RKKLRELCYRGETESESSVSQESSSNSKSSLSESTSL) the chain is Cytoplasmic. Positions 731–756 (ETESESSVSQESSSNSKSSLSESTSL) are disordered. Residues 735-756 (ESSVSQESSSNSKSSLSESTSL) are compositionally biased toward low complexity.

In terms of assembly, interacts with TEX101. Subject to proteolytic processing during epididymal transit of spermatozoa. In terms of tissue distribution, detected in testis (at protein level). Detected in adult and prepubertal testis. Detected at very low levels in heart, kidney, brain, muscle ovary and uterus.

It is found in the membrane. Functionally, this is a non catalytic metalloprotease-like protein. May play a role in sperm-egg fusion. This chain is Disintegrin and metalloproteinase domain-containing protein 5 (ADAM5), found in Macaca fascicularis (Crab-eating macaque).